Consider the following 353-residue polypeptide: Guanine nucleotide-binding protein subunit alpha (353 aa).

Positions methionine 1–arginine 25 are disordered. The N-myristoyl glycine moiety is linked to residue glycine 2. Cysteine 3 is lipidated: S-palmitoyl cysteine. The segment covering threonine 7–arginine 25 has biased composition (basic and acidic residues). One can recognise a G-alpha domain in the interval asparagine 32–isoleucine 353. A G1 motif region spans residues lysine 35 to threonine 48. Glutamate 43, serine 44, glycine 45, lysine 46, serine 47, threonine 48, aspartate 150, leucine 175, threonine 181, glycine 203, asparagine 269, lysine 270, aspartate 272, and alanine 325 together coordinate GTP. Serine 47 contributes to the Mg(2+) binding site. The G2 motif stretch occupies residues aspartate 173–threonine 181. Threonine 181 is a binding site for Mg(2+). Positions tyrosine 196–arginine 205 are G3 motif. The interval isoleucine 265–aspartate 272 is G4 motif. Residues threonine 323–threonine 328 form a G5 motif region.

This sequence belongs to the G-alpha family. G(q) subfamily. In terms of assembly, g proteins are composed of 3 units; alpha, beta and gamma. The alpha chain contains the guanine nucleotide binding site. Mg(2+) is required as a cofactor.

In terms of biological role, guanine nucleotide-binding proteins (G proteins) are involved as modulators or transducers in various transmembrane signaling systems. The chain is Guanine nucleotide-binding protein subunit alpha (CTG1) from Colletotrichum trifolii.